Consider the following 62-residue polypeptide: Small ribosomal subunit protein eS30z/eS30y/eS30x (62 aa).

Positions 1–38 are disordered; that stretch reads MGKVHGSLARAGKVRGQTPKVAKQDKKKKPRGRAHKRL. Positions 25 to 38 are enriched in basic residues; it reads DKKKKPRGRAHKRL.

The protein belongs to the eukaryotic ribosomal protein eS30 family.

The chain is Small ribosomal subunit protein eS30z/eS30y/eS30x (RPS30A) from Arabidopsis thaliana (Mouse-ear cress).